The chain runs to 284 residues: Sulfotransferase 2A1 (284 aa).

3'-phosphoadenylyl sulfate is bound by residues lysine 43, serine 44, glycine 45, threonine 46, asparagine 47, and tryptophan 48. The active-site Proton acceptor is histidine 98. Arginine 120, serine 128, tyrosine 183, serine 217, methionine 222, arginine 246, lysine 247, and glycine 248 together coordinate 3'-phosphoadenylyl sulfate.

The protein belongs to the sulfotransferase 1 family. Homodimer.

The protein localises to the cytoplasm. It carries out the reaction an alcohol + 3'-phosphoadenylyl sulfate = an alkyl sulfate + adenosine 3',5'-bisphosphate + H(+). The enzyme catalyses taurolithocholate + 3'-phosphoadenylyl sulfate = taurolithocholate 3-sulfate + adenosine 3',5'-bisphosphate + H(+). It catalyses the reaction lithocholate + 3'-phosphoadenylyl sulfate = lithocholate sulfate + adenosine 3',5'-bisphosphate + H(+). The catalysed reaction is (24S)-hydroxycholesterol + 3'-phosphoadenylyl sulfate = (24S)-hydroxycholesterol 24-sulfate + adenosine 3',5'-bisphosphate + H(+). It carries out the reaction (24S)-hydroxycholesterol + 3'-phosphoadenylyl sulfate = (24S)-hydroxycholesterol 3-sulfate + adenosine 3',5'-bisphosphate + H(+). The enzyme catalyses (24S)-hydroxycholesterol 24-sulfate + 3'-phosphoadenylyl sulfate = (24S)-hydroxycholesterol 3,24-disulfate + adenosine 3',5'-bisphosphate + H(+). It catalyses the reaction 3beta-hydroxyandrost-5-en-17-one + 3'-phosphoadenylyl sulfate = dehydroepiandrosterone 3-sulfate + adenosine 3',5'-bisphosphate + H(+). The catalysed reaction is pregnenolone + 3'-phosphoadenylyl sulfate = pregnenolone sulfate + adenosine 3',5'-bisphosphate + H(+). It carries out the reaction androsterone + 3'-phosphoadenylyl sulfate = androsterone 3alpha-sulfate + adenosine 3',5'-bisphosphate + H(+). Sulfotransferase that utilizes 3'-phospho-5'-adenylyl sulfate (PAPS) as sulfonate donor to catalyze the sulfonation of steroids and bile acids in the liver and adrenal glands. Mediates the sulfation of a wide range of steroids and sterols, including pregnenolone, androsterone, DHEA, bile acids, cholesterol and as well many xenobiotics that contain alcohol and phenol functional groups. Sulfonation increases the water solubility of most compounds, and therefore their renal excretion, but it can also result in bioactivation to form active metabolites. Plays an important role in maintening steroid and lipid homeostasis. Plays a key role in bile acid metabolism. In addition, catalyzes the metabolic activation of potent carcinogenic polycyclic arylmethanols. This is Sulfotransferase 2A1 (Sult2a1) from Rattus norvegicus (Rat).